The chain runs to 419 residues: Putative zinc metalloprotease SPs1691 (419 aa).

His18 is a Zn(2+) binding site. Residue Glu19 is part of the active site. His22 lines the Zn(2+) pocket. Helical transmembrane passes span 169 to 191, 301 to 323, 343 to 365, and 392 to 411; these read LITN…ILLV, LAWS…FSLN, LESV…LIPI, and AYIT…AVTW. Residues 175-274 form the PDZ domain; the sequence is GPMNNFILGI…LKTVAVKPQK (100 aa).

This sequence belongs to the peptidase M50B family. Zn(2+) serves as cofactor.

It localises to the cell membrane. This Streptococcus pyogenes serotype M3 (strain SSI-1) protein is Putative zinc metalloprotease SPs1691 (eep).